Consider the following 281-residue polypeptide: Diaminopimelate epimerase (281 aa).

N13 and N66 together coordinate substrate. The active-site Proton donor is the C75. Residues 76-77 (GN), N164, N197, and 215-216 (ER) contribute to the substrate site. C224 functions as the Proton acceptor in the catalytic mechanism. Residue 225–226 (GT) coordinates substrate.

It belongs to the diaminopimelate epimerase family. As to quaternary structure, homodimer.

The protein localises to the cytoplasm. The catalysed reaction is (2S,6S)-2,6-diaminopimelate = meso-2,6-diaminopimelate. Its pathway is amino-acid biosynthesis; L-lysine biosynthesis via DAP pathway; DL-2,6-diaminopimelate from LL-2,6-diaminopimelate: step 1/1. Its function is as follows. Catalyzes the stereoinversion of LL-2,6-diaminopimelate (L,L-DAP) to meso-diaminopimelate (meso-DAP), a precursor of L-lysine and an essential component of the bacterial peptidoglycan. The polypeptide is Diaminopimelate epimerase (Gloeothece citriformis (strain PCC 7424) (Cyanothece sp. (strain PCC 7424))).